The chain runs to 569 residues: Phosphoglucomutase 2 (569 aa).

The disordered stretch occupies residues 1–23 (MSFQIETVPTKPYEDQKPGTSGL). Residue serine 2 is modified to N-acetylserine. Residue arginine 24 participates in alpha-D-glucose 1,6-bisphosphate binding. Threonine 111 and threonine 117 each carry phosphothreonine. Serine 119 contributes to the alpha-D-glucose 1,6-bisphosphate binding site. Serine 119 (phosphoserine intermediate) is an active-site residue. Mg(2+) is bound by residues serine 119, aspartate 290, aspartate 292, and aspartate 294. Serine 119 carries the phosphoserine modification. 6 residues coordinate alpha-D-glucose 1,6-bisphosphate: aspartate 294, arginine 295, threonine 359, glutamate 378, serine 380, and lysine 391.

It belongs to the phosphohexose mutase family. In terms of assembly, monomer. Mg(2+) is required as a cofactor. Requires Zn(2+) as cofactor. O-glycosylated with mannose residues. Substrate of UDP-glucose--glycoprotein glucose phosphotransferase, linking glucose in a phosphodiester linkage to O-linked mannose.

It localises to the cytoplasm. It catalyses the reaction alpha-D-glucose 1-phosphate = alpha-D-glucose 6-phosphate. The enzyme catalyses O-phospho-L-seryl-[protein] + alpha-D-glucose 1-phosphate = alpha-D-glucose 1,6-bisphosphate + L-seryl-[protein]. The catalysed reaction is alpha-D-glucose 1,6-bisphosphate + L-seryl-[protein] = O-phospho-L-seryl-[protein] + alpha-D-glucose 6-phosphate. Major phosphoglucomutase isozyme that catalyzes the reversible isomerization of alpha-D-glucose 1-phosphate to alpha-D-glucose 6-phosphate. The mechanism proceeds via the intermediate compound alpha-D-glucose 1,6-bisphosphate. Constitutes about 80-90% of the phosphoglucomutase activity in the cell. Key enzyme in hexose metabolism. The forward reaction is an essential step in the energy metabolism of galactose since the product of the galactose pathway enzymes in yeast is glucose 1-phosphate. The reverse reaction is an essential step for biosynthesis when carbon sources other than galactose are the energy source because glucose 1-phosphate is the starting point for the synthesis of UDP-glucose, which acts as a precursor for the synthesis of oligosaccharides and trehalose. This chain is Phosphoglucomutase 2, found in Saccharomyces cerevisiae (strain ATCC 204508 / S288c) (Baker's yeast).